Reading from the N-terminus, the 327-residue chain is DNA-directed RNA polymerase subunit alpha (327 aa).

The interval 1–233 (MQNVLKSFLT…HQLAAFVDLK (233 aa)) is alpha N-terminal domain (alpha-NTD). The tract at residues 247–327 (VNPLLLRPVE…GWPPADLTDQ (81 aa)) is alpha C-terminal domain (alpha-CTD).

Belongs to the RNA polymerase alpha chain family. Homodimer. The RNAP catalytic core consists of 2 alpha, 1 beta, 1 beta' and 1 omega subunit. When a sigma factor is associated with the core the holoenzyme is formed, which can initiate transcription.

The catalysed reaction is RNA(n) + a ribonucleoside 5'-triphosphate = RNA(n+1) + diphosphate. Functionally, DNA-dependent RNA polymerase catalyzes the transcription of DNA into RNA using the four ribonucleoside triphosphates as substrates. The protein is DNA-directed RNA polymerase subunit alpha of Coxiella burnetii (strain CbuK_Q154) (Coxiella burnetii (strain Q154)).